The sequence spans 136 residues: Serine--glyoxylate aminotransferase (136 aa).

It belongs to the class-V pyridoxal-phosphate-dependent aminotransferase family. Homodimer. Pyridoxal 5'-phosphate is required as a cofactor. As to expression, expressed in leaves but not in root tissue or seedlings.

The protein resides in the peroxisome. It carries out the reaction glyoxylate + L-serine = 3-hydroxypyruvate + glycine. The enzyme catalyses glyoxylate + L-alanine = glycine + pyruvate. Inhibited by aminooxyacetate. This is Serine--glyoxylate aminotransferase from Zea mays (Maize).